A 333-amino-acid chain; its full sequence is D-fructose 1,6-bisphosphatase class 2/sedoheptulose 1,7-bisphosphatase (333 aa).

Mn(2+)-binding residues include Asp-33, Glu-57, Asp-85, and Glu-88. Substrate is bound by residues 88–90, Tyr-119, 164–166, and 186–188; these read EGT, RTR, and DGD. Glu-213 contacts Mn(2+).

The protein belongs to the FBPase class 2 family. Homotetramer. The cofactor is Mn(2+).

It catalyses the reaction beta-D-fructose 1,6-bisphosphate + H2O = beta-D-fructose 6-phosphate + phosphate. The catalysed reaction is D-sedoheptulose 1,7-bisphosphate + H2O = D-sedoheptulose 7-phosphate + phosphate. Its pathway is carbohydrate biosynthesis; Calvin cycle. Its function is as follows. Catalyzes the hydrolysis of fructose 1,6-bisphosphate (Fru 1,6-P2) and sedoheptulose 1,7-bisphosphate (Sed 1,7-P2) to fructose 6-phosphate and sedoheptulose 7-phosphate, respectively. This chain is D-fructose 1,6-bisphosphatase class 2/sedoheptulose 1,7-bisphosphatase, found in Prochlorococcus marinus (strain MIT 9312).